A 780-amino-acid chain; its full sequence is Protein SAV (780 aa).

Residues 253–260 (GPPGTGKT) and 528–535 (GPPGTGKT) each bind ATP.

It belongs to the AAA ATPase family. CDC48 subfamily.

In terms of biological role, not yet known, shows ATPase activity. This Sulfolobus acidocaldarius (strain ATCC 33909 / DSM 639 / JCM 8929 / NBRC 15157 / NCIMB 11770) protein is Protein SAV (sav).